A 194-amino-acid polypeptide reads, in one-letter code: Small ribosomal subunit protein eS7 (194 aa).

The protein belongs to the eukaryotic ribosomal protein eS7 family.

In Caenorhabditis elegans, this protein is Small ribosomal subunit protein eS7 (rps-7).